We begin with the raw amino-acid sequence, 615 residues long: Translation initiation factor IF-2 (615 aa).

Residues 118–285 (KRPPIVTVMG…AILTLAEINE (168 aa)) enclose the tr-type G domain. The interval 127-134 (GHVDHGKT) is G1. 127-134 (GHVDHGKT) is a binding site for GTP. The G2 stretch occupies residues 152-156 (GITQH). Residues 173-176 (DTPG) form a G3 region. GTP contacts are provided by residues 173-177 (DTPGH) and 227-230 (NKMD). The segment at 227 to 230 (NKMD) is G4. Residues 263 to 265 (SAI) are G5.

It belongs to the TRAFAC class translation factor GTPase superfamily. Classic translation factor GTPase family. IF-2 subfamily.

Its subcellular location is the cytoplasm. Its function is as follows. One of the essential components for the initiation of protein synthesis. Protects formylmethionyl-tRNA from spontaneous hydrolysis and promotes its binding to the 30S ribosomal subunits. Also involved in the hydrolysis of GTP during the formation of the 70S ribosomal complex. The polypeptide is Translation initiation factor IF-2 (Mycoplasmoides gallisepticum (strain R(low / passage 15 / clone 2)) (Mycoplasma gallisepticum)).